Here is a 496-residue protein sequence, read N- to C-terminus: Probable G-protein coupled receptor K01A12.3 (496 aa).

Over 1 to 19 the chain is Extracellular; sequence MESVTRHRADMISFFTFDS. Residues 20–40 form a helical membrane-spanning segment; the sequence is YISIVGVAYTAVGLLGVFCNV. At 41–58 the chain is on the cytoplasmic side; it reads TTVIMILTNRVFRLSAYT. A helical membrane pass occupies residues 59-79; the sequence is IMANVALADSIVMLIAGVACG. Topologically, residues 80–128 are extracellular; sequence MDVMWPNPNDLTSFIPSLEEPYQKIAPVSLRNDSKTDSSAAGFETGNIH. N-linked (GlcNAc...) asparagine glycosylation occurs at N111. Residues 129 to 149 form a helical membrane-spanning segment; sequence AVLSFSFVAAWTAGVISYAML. Residues 150 to 169 are Cytoplasmic-facing; it reads GTNRCIAICYYGTKARALNQ. Residues 170 to 190 traverse the membrane as a helical segment; the sequence is VSVAVACSASTWIVGIAAALV. Topologically, residues 191–216 are extracellular; it reads GTLSQPMIGIQRTMWSISFLEPRPHT. The helical transmembrane segment at 217–237 threads the bilayer; sequence TLFFTLLCAANLLGLGAQWVC. Topologically, residues 238–285 are cytoplasmic; it reads STLVLLKIRQVKKKISKNKLNQNSANRFRKQVILALNEIIVTGNFKAR. The helical transmembrane segment at 286–306 threads the bilayer; that stretch reads LTFQFFYPSILCTISTFLFFI. The Extracellular portion of the chain corresponds to 307–318; the sequence is KPYAFEYLSGWQ. The chain crosses the membrane as a helical span at residues 319–339; the sequence is LVILHLLWLCNHTCNPFIYAY. Over 340 to 496 the chain is Cytoplasmic; it reads FNDRMRLTYK…WVKFAKKASI (157 aa). The interval 451–470 is disordered; sequence TKELESAHNQGGSSRFDSER.

This sequence belongs to the G-protein coupled receptor 1 family.

The protein localises to the cell membrane. This Caenorhabditis elegans protein is Probable G-protein coupled receptor K01A12.3.